The following is a 239-amino-acid chain: Ribonuclease PH (239 aa).

Residues Arg86 and 124–126 (GTR) contribute to the phosphate site.

This sequence belongs to the RNase PH family. As to quaternary structure, homohexameric ring arranged as a trimer of dimers.

The catalysed reaction is tRNA(n+1) + phosphate = tRNA(n) + a ribonucleoside 5'-diphosphate. Phosphorolytic 3'-5' exoribonuclease that plays an important role in tRNA 3'-end maturation. Removes nucleotide residues following the 3'-CCA terminus of tRNAs; can also add nucleotides to the ends of RNA molecules by using nucleoside diphosphates as substrates, but this may not be physiologically important. Probably plays a role in initiation of 16S rRNA degradation (leading to ribosome degradation) during starvation. The chain is Ribonuclease PH from Rhizobium leguminosarum bv. trifolii (strain WSM2304).